A 476-amino-acid polypeptide reads, in one-letter code: Glycogen synthase (476 aa).

Residue Lys-15 coordinates ADP-alpha-D-glucose.

Belongs to the glycosyltransferase 1 family. Bacterial/plant glycogen synthase subfamily.

It catalyses the reaction [(1-&gt;4)-alpha-D-glucosyl](n) + ADP-alpha-D-glucose = [(1-&gt;4)-alpha-D-glucosyl](n+1) + ADP + H(+). It participates in glycan biosynthesis; glycogen biosynthesis. Functionally, synthesizes alpha-1,4-glucan chains using ADP-glucose. The chain is Glycogen synthase from Marinomonas sp. (strain MWYL1).